Reading from the N-terminus, the 108-residue chain is LBH domain-containing protein 2 (108 aa).

The segment covering 1–11 has biased composition (pro residues); sequence MSTPRPAPPQP. Positions 1-108 are disordered; the sequence is MSTPRPAPPQ…SEDPAAPARG (108 aa). Residues 37-62 form the LBH domain; sequence QRLPSIVVEPSEADPVESGELRWPLE. The segment covering 63-85 has biased composition (low complexity); it reads SAQRGPSQSRAAAAPSPSLPGEP.

The polypeptide is LBH domain-containing protein 2 (Homo sapiens (Human)).